The primary structure comprises 365 residues: Neuronal migration protein doublecortin (365 aa).

Phosphoserine; by CDK5 is present on S28. Residue S47 is modified to Phosphoserine; by MARK1 and PKA. Doublecortin domains lie at 53-139 (KKVR…VEYT) and 180-263 (KLVT…AQDD). Y70 is modified (phosphotyrosine; by ABL). Position 74 is a phosphoserine; by PKC (S74). The residue at position 90 (S90) is a Phosphoserine; by CK2. A Phosphoserine; by PKC modification is found at S110. Phosphoserine; by CK2, MARK1 and PKA is present on S115. At S265 the chain carries Phosphoserine; by CK2. A disordered region spans residues 275-365 (KGNPSATAGP…DDSDSLGDSM (91 aa)). S287 is modified (phosphoserine; by CDK5). T289 bears the Phosphothreonine; by CDK5 mark. S294 bears the Phosphoserine; by PKC mark. The residue at position 297 (S297) is a Phosphoserine; by CDK5. Residue S306 is modified to Phosphoserine; by CK2. S306 carries the post-translational modification Phosphoserine; by DYRK2. Over residues 307–341 (PADSGNDQDANGTSSSQLSTPKSKQSPISTPTSPG) the composition is skewed to polar residues. T326 is subject to Phosphothreonine; by CDK5. A Phosphothreonine; by PKC and MAPK modification is found at T326. S332 bears the Phosphoserine; by CDK5 mark. A Phosphoserine; by MAPK modification is found at S332. T336 is subject to Phosphothreonine; by MAPK. S339 carries the post-translational modification Phosphoserine; by CDK5. S339 bears the Phosphoserine; by MAPK mark. The residue at position 342 (S342) is a Phosphoserine; by PKC. Phosphoserine; by CK2 occurs at positions 354 and 360. The segment covering 356–365 (DDSDSLGDSM) has biased composition (acidic residues).

As to quaternary structure, interacts with tubulin. Interacts with USP9X. In terms of processing, phosphorylation by MARK1, MARK2 and PKA regulates its ability to bind microtubules. Phosphorylation at Ser-265 and Ser-297 seems to occur only in neonatal brain, the levels falling precipitously by postnatal day 21. Ubiquitinated by MDM2, leading to its degradation by the proteasome. Ubiquitinated by MDM2 and subsequent degradation leads to reduce the dendritic spine density of olfactory bulb granule cells.

Its subcellular location is the cytoplasm. It is found in the cell projection. The protein resides in the neuron projection. Its function is as follows. Microtubule-associated protein required for initial steps of neuronal dispersion and cortex lamination during cerebral cortex development. May act by competing with the putative neuronal protein kinase DCLK1 in binding to a target protein. May in that way participate in a signaling pathway that is crucial for neuronal interaction before and during migration, possibly as part of a calcium ion-dependent signal transduction pathway. May participate along with PAFAH1B1/LIS-1 in a distinct overlapping signaling pathway that promotes neuronal migration. In Rattus norvegicus (Rat), this protein is Neuronal migration protein doublecortin (Dcx).